The sequence spans 545 residues: Autoimmune regulator (545 aa).

The region spanning 1–105 (MATDAALRRL…ILDSFPKDVD (105 aa)) is the HSR domain. 2 consecutive short sequence motifs (LXXLL motif) follow at residues 7–11 (LRRLL) and 63–67 (LSWLL). Disordered regions lie at residues 101–178 (PKDV…LPLG) and 234–290 (SKFE…SDPQ). Positions 116–128 (PAVPKALVPPPRL) are enriched in pro residues. Residues 140 to 152 (AAAPAALTPRGTA) are compositionally biased toward low complexity. Positions 181–280 (IQTMSASVQR…ARLGQQGSVP (100 aa)) constitute an SAND domain. Interaction with histone H3 not methylated at 'Lys-4' regions lie at residues 295–298 (NEDE), 304–312 (DGGELICCD), and 331–335 (PSGTW). A PHD-type 1 zinc finger spans residues 296–343 (EDECAVCRDGGELICCDGCPRAFHLACLSPPLREIPSGTWRCSSCLQA). The tract at residues 348-382 (VQPRAEEPRPQEPPVETPLPPGLRSAGEEVRGPPG) is disordered. Positions 358-368 (QEPPVETPLPP) are enriched in pro residues. Positions 414–418 (LHPLL) match the LXXLL motif 3 motif. The PHD-type 2 zinc-finger motif lies at 434-475 (CGVCGDGTDVLRCTHCAAAFHWRCHFPAGTSRPGTGLRCRSC). The segment at 489–508 (APSPARLAPGPAKDDTASHE) is disordered. Residues 516 to 520 (LESLL) carry the LXXLL motif 4 motif.

In terms of assembly, homodimer and homotetramer. Interacts with CREBBP. Interacts preferentially with histone H3 that is not methylated at 'Lys-4'. Binds with lower affinity to histone H3 that is monomethylated at 'Lys-4'. Trimethylation of histone H3 at 'Lys-4' or phosphorylation at 'Thr-3' abolish the interaction. Binds with lower affinity to histone H3 that is acetylated at 'Lys-4', or that is acetylated at 'Lys-9' or trimethylated at 'Lys-9'. Binds histone H3 that is dimethylated at 'Arg-2' with very low affinity. Post-translationally, phosphorylated. Phosphorylation could trigger oligomerization. In terms of tissue distribution, widely expressed. Expressed at higher level in thymus (medullary epithelial cells and monocyte-dendritic cells), pancreas, adrenal cortex and testis. Expressed at lower level in the spleen, fetal liver and lymph nodes. In secondary lymphoid organs, expressed in a discrete population of bone marrow-derived toleregenic antigen presenting cells (APCs) called extrathymic AIRE expressing cells (eTAC)(at protein level). Isoform 2 and isoform 3 seem to be less frequently expressed than isoform 1, if at all.

The protein resides in the nucleus. The protein localises to the cytoplasm. Its function is as follows. Transcription factor playing an essential role to promote self-tolerance in the thymus by regulating the expression of a wide array of self-antigens that have the commonality of being tissue-restricted in their expression pattern in the periphery, called tissue restricted antigens (TRA). Binds to G-doublets in an A/T-rich environment; the preferred motif is a tandem repeat of 5'-ATTGGTTA-3' combined with a 5'-TTATTA-3' box. Binds to nucleosomes. Binds to chromatin and interacts selectively with histone H3 that is not methylated at 'Lys-4', not phosphorylated at 'Thr-3' and not methylated at 'Arg-2'. Functions as a sensor of histone H3 modifications that are important for the epigenetic regulation of gene expression. Mainly expressed by medullary thymic epithelial cells (mTECs), induces the expression of thousands of tissue-restricted proteins, which are presented on major histocompatibility complex class I (MHC-I) and MHC-II molecules to developing T-cells percolating through the thymic medulla. Also induces self-tolerance through other mechanisms such as the regulation of the mTEC differentiation program. Controls the medullary accumulation of thymic dendritic cells and the development of regulatory T-cell through the regulation of XCL1 expression. Regulates the production of CCR4 and CCR7 ligands in medullary thymic epithelial cells and alters the coordinated maturation and migration of thymocytes. In thimic B-cells, allows the presentation of licensing-dependent endogenous self-anitgen for negative selection. In secondary lymphoid organs, induces functional inactivation of CD4(+) T-cells. Expressed by a distinct bone marrow-derived population, induces self-tolerance through a mechanism that does not require regulatory T-cells and is resitant to innate inflammatory stimuli. The protein is Autoimmune regulator (AIRE) of Homo sapiens (Human).